The primary structure comprises 210 residues: Large ribosomal subunit protein uL4 (210 aa).

The disordered stretch occupies residues 57–78 (VSGGGAKPWKQKGTGRARAGSN).

This sequence belongs to the universal ribosomal protein uL4 family. As to quaternary structure, part of the 50S ribosomal subunit.

One of the primary rRNA binding proteins, this protein initially binds near the 5'-end of the 23S rRNA. It is important during the early stages of 50S assembly. It makes multiple contacts with different domains of the 23S rRNA in the assembled 50S subunit and ribosome. Its function is as follows. Forms part of the polypeptide exit tunnel. This chain is Large ribosomal subunit protein uL4, found in Desulfovibrio desulfuricans (strain ATCC 27774 / DSM 6949 / MB).